Here is a 262-residue protein sequence, read N- to C-terminus: Thiazole synthase (262 aa).

Lysine 96 functions as the Schiff-base intermediate with DXP in the catalytic mechanism. 1-deoxy-D-xylulose 5-phosphate is bound by residues glycine 157, alanine 184–glycine 185, and asparagine 206–threonine 207.

It belongs to the ThiG family. Homotetramer. Forms heterodimers with either ThiH or ThiS.

It is found in the cytoplasm. The catalysed reaction is [ThiS sulfur-carrier protein]-C-terminal-Gly-aminoethanethioate + 2-iminoacetate + 1-deoxy-D-xylulose 5-phosphate = [ThiS sulfur-carrier protein]-C-terminal Gly-Gly + 2-[(2R,5Z)-2-carboxy-4-methylthiazol-5(2H)-ylidene]ethyl phosphate + 2 H2O + H(+). It functions in the pathway cofactor biosynthesis; thiamine diphosphate biosynthesis. Its function is as follows. Catalyzes the rearrangement of 1-deoxy-D-xylulose 5-phosphate (DXP) to produce the thiazole phosphate moiety of thiamine. Sulfur is provided by the thiocarboxylate moiety of the carrier protein ThiS. In vitro, sulfur can be provided by H(2)S. This chain is Thiazole synthase, found in Legionella pneumophila (strain Corby).